The primary structure comprises 383 residues: Teichoic acid glycerol-phosphate primase (383 aa).

It belongs to the CDP-glycerol glycerophosphotransferase family.

Its subcellular location is the cell membrane. The catalysed reaction is N-acetyl-beta-D-mannosaminyl-(1-&gt;4)-N-acetyl-alpha-D-glucosaminyl di-trans,octa-cis-undecaprenyl diphosphate + CDP-glycerol = 4-O-[(2R)-glycerylphospho]-N-acetyl-beta-D-mannosaminyl-(1-&gt;4)-N-acetyl-alpha-D-glucosaminyl di-trans,octa-cis-undecaprenyl diphosphate + CMP + H(+). It participates in cell wall biogenesis; poly(ribitol phosphate) teichoic acid biosynthesis. In terms of biological role, catalyzes the addition of a single glycerol phosphate residue to the prenoldiphosphate-linked disaccharide. The protein is Teichoic acid glycerol-phosphate primase (tarB) of Bacillus spizizenii (strain ATCC 23059 / NRRL B-14472 / W23) (Bacillus subtilis subsp. spizizenii).